The following is a 357-amino-acid chain: MAARLALRGGPGAAGQRPWLLLAPLLLVPLLARPAEALVEGLYCGTRDCYEVLGVSRSASKAEIARAYRQLARRYHPDRYRPEPGDGPGGAPPSAEAFLLVATAYETLKDEETRKDYDYMLDHPEEYYSHYYHYYSRRLAPKVDVRVVILVSVCAISMFQYFSWWNSYNKAISYLATVPKYRIQATEIAKEQGLLKKAKEKGKNKKSKEEIRDEEENIIKNIIKSKIDIKGGYQKPQVRDLLLFQVILAPVHLCSYIAWYCRWIYNFNIKGKEYGEEERLYIIRKSMKMSQSQFDSLEDHQKEMFLKRELWIKENYEVYKQEQEEELKKKLANDPRWKRYRRWMKNEGPGRLTFVDD.

Residues 19-39 traverse the membrane as a helical segment; that stretch reads WLLLAPLLLVPLLARPAEALV. The J domain maps to 48 to 121; that stretch reads DCYEVLGVSR…ETRKDYDYML (74 aa). Transmembrane regions (helical) follow at residues 147-167 and 241-261; these read VVIL…WWNS and LLLF…AWYC.

It belongs to the DNAJC25 family.

It localises to the membrane. The protein is DnaJ homolog subfamily C member 25 (Dnajc25) of Mus musculus (Mouse).